The chain runs to 141 residues: D-aminoacyl-tRNA deacylase (141 aa).

The Gly-cisPro motif, important for rejection of L-amino acids motif lies at glycine 133 to proline 134.

This sequence belongs to the DTD family. As to quaternary structure, homodimer.

It localises to the cytoplasm. It catalyses the reaction glycyl-tRNA(Ala) + H2O = tRNA(Ala) + glycine + H(+). It carries out the reaction a D-aminoacyl-tRNA + H2O = a tRNA + a D-alpha-amino acid + H(+). Functionally, an aminoacyl-tRNA editing enzyme that deacylates mischarged D-aminoacyl-tRNAs. Also deacylates mischarged glycyl-tRNA(Ala), protecting cells against glycine mischarging by AlaRS. Acts via tRNA-based rather than protein-based catalysis; rejects L-amino acids rather than detecting D-amino acids in the active site. By recycling D-aminoacyl-tRNA to D-amino acids and free tRNA molecules, this enzyme counteracts the toxicity associated with the formation of D-aminoacyl-tRNA entities in vivo and helps enforce protein L-homochirality. The chain is D-aminoacyl-tRNA deacylase from Nautilia profundicola (strain ATCC BAA-1463 / DSM 18972 / AmH).